The chain runs to 150 residues: Transcription antitermination protein NusB (150 aa).

This sequence belongs to the NusB family.

Functionally, involved in transcription antitermination. Required for transcription of ribosomal RNA (rRNA) genes. Binds specifically to the boxA antiterminator sequence of the ribosomal RNA (rrn) operons. This chain is Transcription antitermination protein NusB, found in Streptococcus pyogenes serotype M3 (strain ATCC BAA-595 / MGAS315).